Consider the following 430-residue polypeptide: UDP-N-acetylglucosamine 1-carboxyvinyltransferase 1 (430 aa).

22-23 (KN) is a phosphoenolpyruvate binding site. Arg-93 is a UDP-N-acetyl-alpha-D-glucosamine binding site. Cys-117 (proton donor) is an active-site residue. At Cys-117 the chain carries 2-(S-cysteinyl)pyruvic acid O-phosphothioketal. Residues 122–126 (RPVDL), Asp-305, and Val-327 contribute to the UDP-N-acetyl-alpha-D-glucosamine site.

Belongs to the EPSP synthase family. MurA subfamily.

The protein resides in the cytoplasm. The enzyme catalyses phosphoenolpyruvate + UDP-N-acetyl-alpha-D-glucosamine = UDP-N-acetyl-3-O-(1-carboxyvinyl)-alpha-D-glucosamine + phosphate. The protein operates within cell wall biogenesis; peptidoglycan biosynthesis. Cell wall formation. Adds enolpyruvyl to UDP-N-acetylglucosamine. The chain is UDP-N-acetylglucosamine 1-carboxyvinyltransferase 1 from Listeria innocua serovar 6a (strain ATCC BAA-680 / CLIP 11262).